The primary structure comprises 357 residues: tRNA-specific 2-thiouridylase MnmA (357 aa).

ATP is bound by residues 6-13 (AMSGGVDS) and L32. The active-site Nucleophile is C101. Cysteines 101 and 193 form a disulfide. G125 lines the ATP pocket. The interval 143–145 (KDQ) is interaction with tRNA. C193 serves as the catalytic Cysteine persulfide intermediate.

This sequence belongs to the MnmA/TRMU family.

The protein localises to the cytoplasm. The catalysed reaction is S-sulfanyl-L-cysteinyl-[protein] + uridine(34) in tRNA + AH2 + ATP = 2-thiouridine(34) in tRNA + L-cysteinyl-[protein] + A + AMP + diphosphate + H(+). In terms of biological role, catalyzes the 2-thiolation of uridine at the wobble position (U34) of tRNA, leading to the formation of s(2)U34. This Mycolicibacterium vanbaalenii (strain DSM 7251 / JCM 13017 / BCRC 16820 / KCTC 9966 / NRRL B-24157 / PYR-1) (Mycobacterium vanbaalenii) protein is tRNA-specific 2-thiouridylase MnmA.